The sequence spans 86 residues: U15-lycotoxin-Ls1g (86 aa).

Residues 1–20 (MNSKIFAVLLLLGLLSCVLS) form the signal peptide. One can recognise a WAP domain in the interval 21 to 66 (DQYCPKSSITACKKMNIRNDCCKDDDCTGGSWCCATPCGNFCKYPA). Cystine bridges form between Cys24–Cys54, Cys32–Cys58, Cys41–Cys53, Cys42–Cys80, and Cys47–Cys62.

Belongs to the venom protein 11 family. 01 (wap-1) subfamily. In terms of processing, contains 5 disulfide bonds. As to expression, expressed by the venom gland.

Its subcellular location is the secreted. Its function is as follows. Has antibacterial activity. The polypeptide is U15-lycotoxin-Ls1g (Lycosa singoriensis (Wolf spider)).